Here is a 92-residue protein sequence, read N- to C-terminus: Large ribosomal subunit protein eL43 (92 aa).

Zn(2+) is bound by residues Cys39, Cys42, Cys57, and Cys60. The C4-type zinc finger occupies 39-60 (CSFCGKTKMKRRAVGIWHCGSC).

This sequence belongs to the eukaryotic ribosomal protein eL43 family. In terms of assembly, component of the large ribosomal subunit.

The protein resides in the cytoplasm. Component of the large ribosomal subunit. The ribosome is a large ribonucleoprotein complex responsible for the synthesis of proteins in the cell. The sequence is that of Large ribosomal subunit protein eL43 (Rpl37a) from Mus musculus (Mouse).